We begin with the raw amino-acid sequence, 953 residues long: Nucleotide-binding oligomerization domain-containing protein 1 (953 aa).

In terms of domain architecture, CARD spans 15 to 107 (GCHSHIKLLK…VDLRLWLSEI (93 aa)). The region spanning 196–531 (ETVFVFGDAG…AFFTAFFLVA (336 aa)) is the NACHT domain. ATP is bound at residue 202–209 (GDAGVGKS). Residues cysteine 558 and cysteine 567 are each lipidated (S-palmitoyl cysteine). LRR repeat units follow at residues 702–725 (FHRQLALDLDNNNLNDYGVQELQP), 727–750 (FSRLTVIRLSVNQITDTGVKVLCE), 755–778 (YKIVTFLGLYNNQITDIGARYVAQ), 783–806 (CRGLKHLKLGKNRITSEGGKCVAL), 839–862 (HPSLTTLSLAFNGISPEGGKSLAQ), 867–890 (NTTLTVIWLTKNELNDESAECFAE), 895–918 (NQTLRHLWLIQNRITAKGTAQLAR), and 923–946 (NTAITEICLNGNLIKPEEAKVFEN). Residue cysteine 952 is the site of S-palmitoyl cysteine attachment.

Belongs to the NOD1-NOD2 family. As to quaternary structure, homooligomer: homooligomerizes following ligand-binding, promoting RIPK2 recruitment. Interacts (via CARD domain) with RIPK2 (via CARD domain). Following RIPK2 recruitment, RIPK2 homooligomerizes via its CARD domain and forms long filaments named RIPosomes. Interacts (via CARD domain) with ubiquitin; inhibiting interaction with RIPK2. Interacts with ARHGEF2. Interacts with NLRP10 and recruits it to the cell membrane following invasive bacterial infection. Interacts with IFIH1; this interaction promotes transcription of antiviral genes and inhibition of viral replication. Interacts with Irgm1; promoting NOD1 degradation. Interacts with ATG16L1. Post-translationally, ubiquitinated. 'Lys-48'-linked polyubiquitination by RNF34 promotes proteasomal degradation and thereby negatively regulates NOD1 for instance in NF-kappa-B activation. Palmitoylated. Palmitoylation is required for proper recruitment to the bacterial entry site and hence for proper signaling upon cognate peptidoglycan detection. In terms of processing, degraded via selective autophagy following interaction with Irgm1. Irgm1 promotes NOD1-RIPK2 RIPosome recruitment to autophagosome membranes, promoting their SQSTM1/p62-dependent autophagic degradation. Although ubiquitously expressed, NOD1 levels are more abundant in immune cells, the gastrointestinal tract, and adipose tissue.

It is found in the cell membrane. Its subcellular location is the apical cell membrane. It localises to the basolateral cell membrane. The protein resides in the cytoplasm. Functionally, pattern recognition receptor (PRR) that detects bacterial peptidoglycan fragments and other danger signals and thus participates in both innate and adaptive immune responses. Specifically recognizes and binds gamma-D-glutamyl-meso-diaminopimelic acid (iE-DAP), a dipeptide present in peptidoglycan of Gram-negative bacteria. Preferentially binds iE-DAP in tetrapeptide-containing muropeptides (MurNAc-TetraDAP or TetraDAP). Ligand binding triggers oligomerization that facilitates the binding and subsequent activation of the proximal adapter receptor-interacting RIPK2. Following recruitment, RIPK2 undergoes 'Met-1'- (linear) and 'Lys-63'-linked polyubiquitination by E3 ubiquitin-protein ligases XIAP, BIRC2, BIRC3 and the LUBAC complex, becoming a scaffolding protein for downstream effectors, triggering activation of the NF-kappa-B and MAP kinases signaling. This in turn leads to the transcriptional activation of hundreds of genes involved in immune response. Also acts as a regulator of antiviral response elicited by dsRNA and the expression of RLR pathway members by targeting IFIH1 and TRAF3 to modulate the formation of IFIH1-MAVS and TRAF3-MAVS complexes leading to increased transcription of type I IFNs. Also acts as a regulator of autophagy via its interaction with ATG16L1, possibly by recruiting ATG16L1 at the site of bacterial entry. Besides recognizing pathogens, also involved in the endoplasmic reticulum stress response: acts by sensing and binding to the cytosolic metabolite sphingosine-1-phosphate generated in response to endoplasmic reticulum stress, initiating an inflammation process that leads to activation of the NF-kappa-B and MAP kinases signaling. In addition, plays a role in insulin trafficking in beta cells in a cell-autonomous manner. Mechanistically, upon recognizing cognate ligands, NOD1 and RIPK2 localize to insulin vesicles where they recruit RAB1A to direct insulin trafficking through the cytoplasm. This is Nucleotide-binding oligomerization domain-containing protein 1 from Mus musculus (Mouse).